Reading from the N-terminus, the 186-residue chain is ATP-dependent protease subunit HslV (186 aa).

Residue threonine 14 is part of the active site. Na(+) is bound by residues alanine 168, cysteine 171, and threonine 174.

This sequence belongs to the peptidase T1B family. HslV subfamily. As to quaternary structure, a double ring-shaped homohexamer of HslV is capped on each side by a ring-shaped HslU homohexamer. The assembly of the HslU/HslV complex is dependent on binding of ATP.

The protein localises to the cytoplasm. It carries out the reaction ATP-dependent cleavage of peptide bonds with broad specificity.. With respect to regulation, allosterically activated by HslU binding. In terms of biological role, protease subunit of a proteasome-like degradation complex believed to be a general protein degrading machinery. The protein is ATP-dependent protease subunit HslV of Bradyrhizobium sp. (strain ORS 278).